Consider the following 717-residue polypeptide: Cell division cycle protein 27 homolog A (717 aa).

The segment covering 198-208 (TEHIPGENQQD) has biased composition (polar residues). Disordered regions lie at residues 198–217 (TEHIPGENQQDLKIMQQPGD), 282–315 (LSAEAQEESGRRRSARIAARKKNPMSQSFGKDSH), and 342–374 (SKEATTSGQSVSDIGSSVDDEEKSNPSESSPDR). Positions 293–304 (RRSARIAARKKN) are enriched in basic residues. Positions 342 to 356 (SKEATTSGQSVSDIG) are enriched in polar residues. 7 TPR repeats span residues 421-454 (HWVLMQVGKAYFELQDYFNADSSFTLAHQKYPYA), 489-522 (PESWCAVGNCYSLRKDHDTALKMFQRAIQLNERF), 524-556 (YAHTLCGHEFAALEEFEDAERCYRKALGIDTRH), 557-590 (YNAWYGLGMTYLRQEKFEFAQHQFQLALQINPRS), 592-624 (VIMCYYGIALHESKRNDEALMMMEKAVLTDAKN), 625-658 (PLPKYYKAHILTSLGDYHKAQKVLEELKECAPQE), and 659-692 (SSVHASLGKIYNQLKQYDKAVLHFGIALDLSPSP).

The protein belongs to the APC3/CDC27 family. In terms of assembly, the APC/C is composed of at least 10 subunits. Interacts with APC2 and APC10.

It is found in the nucleus. It functions in the pathway protein modification; protein ubiquitination. Functionally, component of the anaphase promoting complex/cyclosome (APC/C), a cell cycle-regulated E3 ubiquitin-protein ligase complex that controls progression through mitosis and the G1 phase of the cell cycle. The APC/C complex controls several key steps in the cell cycle by mediating ubiquitination and subsequent degradation of target proteins such as cyclins. The APC/C complex is required for the female gametophyte development and is involved in several aspect of development by controlling cell division and cell elongation. Involved in the control of endoreduplication. Functionally redundant with CDC27B in the control of gametophyte development. This Arabidopsis thaliana (Mouse-ear cress) protein is Cell division cycle protein 27 homolog A (CDC27A).